The sequence spans 459 residues: Cysteine--tRNA ligase (459 aa).

C28 lines the Zn(2+) pocket. The 'HIGH' region signature appears at V30 to H40. 3 residues coordinate Zn(2+): C209, H234, and E238. A 'KMSKS' region motif is present at residues K266–S270. K269 provides a ligand contact to ATP.

The protein belongs to the class-I aminoacyl-tRNA synthetase family. In terms of assembly, monomer. It depends on Zn(2+) as a cofactor.

The protein localises to the cytoplasm. It catalyses the reaction tRNA(Cys) + L-cysteine + ATP = L-cysteinyl-tRNA(Cys) + AMP + diphosphate. This Haemophilus influenzae (strain 86-028NP) protein is Cysteine--tRNA ligase.